The chain runs to 431 residues: 23S rRNA (uracil(1939)-C(5))-methyltransferase RlmD (431 aa).

A TRAM domain is found at 10–68 (RVTTRQIITVKVNDLDSFGQGVARHNGKALFIPGLLPEESAEVIITEDKKQFARARVSR). C81, C87, C90, and C161 together coordinate [4Fe-4S] cluster. S-adenosyl-L-methionine is bound by residues Q264, F293, N298, E314, N341, and D362. The active-site Nucleophile is C388.

It belongs to the class I-like SAM-binding methyltransferase superfamily. RNA M5U methyltransferase family. RlmD subfamily.

It carries out the reaction uridine(1939) in 23S rRNA + S-adenosyl-L-methionine = 5-methyluridine(1939) in 23S rRNA + S-adenosyl-L-homocysteine + H(+). Its function is as follows. Catalyzes the formation of 5-methyl-uridine at position 1939 (m5U1939) in 23S rRNA. The polypeptide is 23S rRNA (uracil(1939)-C(5))-methyltransferase RlmD (Salmonella paratyphi A (strain ATCC 9150 / SARB42)).